The following is an 856-amino-acid chain: Genome polyprotein (856 aa).

The Peptidase S30 domain occupies 141 to 284; it reads KLTEGQMNHL…QSVLNSMIQF (144 aa). Active-site for P1 proteinase activity residues include His192, Asp201, and Ser235. The short motif at 334-337 is the Involved in interaction with stylet and aphid transmission element; the sequence is KITC. The Involved in virions binding and aphid transmission motif lies at 592 to 594; it reads PTK. In terms of domain architecture, Peptidase C6 spans 618–740; the sequence is LYIAKQGYCY…ESDIKHYRVG (123 aa). Catalysis depends on for helper component proteinase activity residues Cys626 and His699.

The protein belongs to the potyviridae genome polyprotein family. In terms of processing, genome polyprotein of potyviruses undergoes post-translational proteolytic processing by the main proteinase NIa-pro resulting in the production of at least ten individual proteins. The P1 proteinase and the HC-pro cleave only their respective C-termini autocatalytically. 6K1 is essential for proper proteolytic separation of P3 from CI.

It catalyses the reaction Hydrolyzes a Gly-|-Gly bond at its own C-terminus, commonly in the sequence -Tyr-Xaa-Val-Gly-|-Gly, in the processing of the potyviral polyprotein.. In terms of biological role, required for aphid transmission and also has proteolytic activity. Only cleaves a Gly-Gly dipeptide at its own C-terminus. Interacts with virions and aphid stylets. Acts as a suppressor of RNA-mediated gene silencing, also known as post-transcriptional gene silencing (PTGS), a mechanism of plant viral defense that limits the accumulation of viral RNAs. May have RNA-binding activity. This is Genome polyprotein from Potato virus Y (strain O) (PVY).